The chain runs to 95 residues: Aspartyl/glutamyl-tRNA(Asn/Gln) amidotransferase subunit C (95 aa).

This sequence belongs to the GatC family. In terms of assembly, heterotrimer of A, B and C subunits.

The enzyme catalyses L-glutamyl-tRNA(Gln) + L-glutamine + ATP + H2O = L-glutaminyl-tRNA(Gln) + L-glutamate + ADP + phosphate + H(+). The catalysed reaction is L-aspartyl-tRNA(Asn) + L-glutamine + ATP + H2O = L-asparaginyl-tRNA(Asn) + L-glutamate + ADP + phosphate + 2 H(+). Its function is as follows. Allows the formation of correctly charged Asn-tRNA(Asn) or Gln-tRNA(Gln) through the transamidation of misacylated Asp-tRNA(Asn) or Glu-tRNA(Gln) in organisms which lack either or both of asparaginyl-tRNA or glutaminyl-tRNA synthetases. The reaction takes place in the presence of glutamine and ATP through an activated phospho-Asp-tRNA(Asn) or phospho-Glu-tRNA(Gln). The polypeptide is Aspartyl/glutamyl-tRNA(Asn/Gln) amidotransferase subunit C (Methylocella silvestris (strain DSM 15510 / CIP 108128 / LMG 27833 / NCIMB 13906 / BL2)).